The primary structure comprises 335 residues: Glutamyl-tRNA reductase (335 aa).

Substrate contacts are provided by residues 60 to 63, serine 110, 115 to 117, and glutamine 121; these read TCHR and ETE. Catalysis depends on cysteine 61, which acts as the Nucleophile. An NADP(+)-binding site is contributed by 189-194; that stretch reads GYSEIN.

Belongs to the glutamyl-tRNA reductase family. Homodimer.

It carries out the reaction (S)-4-amino-5-oxopentanoate + tRNA(Glu) + NADP(+) = L-glutamyl-tRNA(Glu) + NADPH + H(+). It functions in the pathway porphyrin-containing compound metabolism; protoporphyrin-IX biosynthesis; 5-aminolevulinate from L-glutamyl-tRNA(Glu): step 1/2. Functionally, catalyzes the NADPH-dependent reduction of glutamyl-tRNA(Glu) to glutamate 1-semialdehyde (GSA). The polypeptide is Glutamyl-tRNA reductase (Chlamydia trachomatis serovar L2 (strain ATCC VR-902B / DSM 19102 / 434/Bu)).